The primary structure comprises 250 residues: Hydroxyacylglutathione hydrolase (250 aa).

His-53, His-55, Asp-57, His-58, His-111, Asp-128, and His-166 together coordinate Zn(2+).

This sequence belongs to the metallo-beta-lactamase superfamily. Glyoxalase II family. Monomer. The cofactor is Zn(2+).

The enzyme catalyses an S-(2-hydroxyacyl)glutathione + H2O = a 2-hydroxy carboxylate + glutathione + H(+). The protein operates within secondary metabolite metabolism; methylglyoxal degradation; (R)-lactate from methylglyoxal: step 2/2. Functionally, thiolesterase that catalyzes the hydrolysis of S-D-lactoyl-glutathione to form glutathione and D-lactic acid. The chain is Hydroxyacylglutathione hydrolase from Methylobacillus flagellatus (strain ATCC 51484 / DSM 6875 / VKM B-1610 / KT).